The sequence spans 165 residues: GTP-dependent dephospho-CoA kinase (165 aa).

Residues Asp-44, Val-45, Asp-63, Lys-65, Glu-115, and Asp-138 each coordinate GTP.

This sequence belongs to the GTP-dependent DPCK family.

The enzyme catalyses 3'-dephospho-CoA + GTP = GDP + CoA + H(+). The protein operates within cofactor biosynthesis; coenzyme A biosynthesis. Its function is as follows. Catalyzes the GTP-dependent phosphorylation of the 3'-hydroxyl group of dephosphocoenzyme A to form coenzyme A (CoA). This is GTP-dependent dephospho-CoA kinase from Picrophilus torridus (strain ATCC 700027 / DSM 9790 / JCM 10055 / NBRC 100828 / KAW 2/3).